The chain runs to 338 residues: Ornithine carbamoyltransferase (338 aa).

Carbamoyl phosphate is bound by residues 56–59, Arg-107, and 134–137; these read STRT and HPTQ. L-ornithine is bound by residues Asn-168, Asp-232, and 236-237; that span reads SM. Residues 274–275 and Arg-320 contribute to the carbamoyl phosphate site; that span reads CL.

Belongs to the aspartate/ornithine carbamoyltransferase superfamily. OTCase family.

It localises to the cytoplasm. The catalysed reaction is carbamoyl phosphate + L-ornithine = L-citrulline + phosphate + H(+). Its pathway is amino-acid biosynthesis; L-arginine biosynthesis; L-arginine from L-ornithine and carbamoyl phosphate: step 1/3. Functionally, reversibly catalyzes the transfer of the carbamoyl group from carbamoyl phosphate (CP) to the N(epsilon) atom of ornithine (ORN) to produce L-citrulline. In Buchnera aphidicola subsp. Schizaphis graminum (strain Sg), this protein is Ornithine carbamoyltransferase (argI).